A 725-amino-acid polypeptide reads, in one-letter code: N-alpha-acetyltransferase 35, NatC auxiliary subunit (725 aa).

The interval 548-573 (ERIMEEQQKGRSSKKTKKKKKVRPLS) is disordered. Basic residues predominate over residues 558-571 (RSSKKTKKKKKVRP).

Belongs to the MAK10 family. Component of the N-terminal acetyltransferase C (NatC) complex.

The protein localises to the cytoplasm. In terms of biological role, auxillary component of the N-terminal acetyltransferase C (NatC) complex which catalyzes acetylation of N-terminal methionine residues. N-terminal acetylation protects proteins from ubiquitination and degradation by the N-end rule pathway. The protein is N-alpha-acetyltransferase 35, NatC auxiliary subunit (NAA35) of Gallus gallus (Chicken).